The sequence spans 913 residues: Protein SEY1 homolog (913 aa).

The Cytoplasmic portion of the chain corresponds to 1–825 (MTDVNKTQII…ETGGHMSLKN (825 aa)). Residues 33–288 (GFNYNVIAIL…IPADGFAQYC (256 aa)) enclose the GB1/RHD3-type G domain. Position 43 to 50 (43 to 50 (GSQSSGKS)) interacts with GTP. Residues 826 to 846 (VPFAFWVILLILGWNEILMFT) form a helical membrane-spanning segment. Residues 847–849 (RLF) lie on the Lumenal side of the membrane. A helical transmembrane segment spans residues 850–870 (FRLNIILPMLIGFIIIVISCL). Residues 871–913 (YTGNAQILSYINKIIFIVIKNLYNFYKHLQTIGHQTTKPEKVE) lie on the Cytoplasmic side of the membrane.

The protein belongs to the TRAFAC class dynamin-like GTPase superfamily. GB1/RHD3 GTPase family. RHD3 subfamily.

The protein localises to the endoplasmic reticulum membrane. Probable GTP-binding protein involved in generating and maintaining the structure of the tubular endoplasmic reticulum network. This Plasmodium berghei (strain Anka) protein is Protein SEY1 homolog.